Here is a 502-residue protein sequence, read N- to C-terminus: Cytochrome P450 monooxygenase prhN (502 aa).

A helical transmembrane segment spans residues Ser-14–Trp-30. An N-linked (GlcNAc...) asparagine glycan is attached at Asn-165. Cys-443 contributes to the heme binding site. A glycan (N-linked (GlcNAc...) asparagine) is linked at Asn-474.

This sequence belongs to the cytochrome P450 family. The cofactor is heme.

The protein resides in the membrane. It participates in secondary metabolite biosynthesis; terpenoid biosynthesis. Its function is as follows. Cytochrome P450 monooxygenase; part of the gene cluster that mediates the biosynthesis of paraherquonin, a meroterpenoid with a unique, highly congested hexacyclic molecular architecture. The first step of the pathway is the synthesis of 3,5-dimethylorsellinic acid (DMOA) by the polyketide synthase prhL. Synthesis of DMOA is followed by farnesylation by the prenyltransferase prhE, methylesterification by the methyl-transferase prhM, epoxidation of the prenyl chain by the flavin-dependent monooxygenase prhF, and cyclization of the farnesyl moiety by the terpene cyclase prhH, to yield the tetracyclic intermediate, protoaustinoid A. The short chain dehydrogenase prhI then oxidizes the C-3 alcohol group of the terpene cyclase product to transform protoaustinoid A into protoaustinoid B. The FAD-binding monooxygenase prhJ catalyzes the oxidation of protoaustinoid B into preaustinoid A which is further oxidized into preaustinoid A1 by FAD-binding monooxygenase phrK. Finally, prhA leads to berkeleydione via the berkeleyone B intermediate. PrhA is a multifunctional dioxygenase that first desaturates at C5-C6 to form berkeleyone B, followed by rearrangement of the A/B-ring to form the cycloheptadiene moiety in berkeleydione. Berkeleydione serves as the key intermediate for the biosynthesis of paraherquonin as well as many other meroterpenoids. The cytochrome P450 monooxygenases prhB, prhD, and prhN, as well as the isomerase prhC, are probably involved in the late stage of paraherquonin biosynthesis, after the production of berkeleydione. Especially prhC might be a multifunctional enzyme that catalyzes the D-ring expansion via intramolecular methoxy rearrangement, as well as the hydrolysis of the expanded D-ring. The chain is Cytochrome P450 monooxygenase prhN from Penicillium brasilianum.